A 374-amino-acid polypeptide reads, in one-letter code: Speckle-type POZ protein (374 aa).

One can recognise an MATH domain in the interval 31–161 (KFSYMWTINN…DDKLTLFCEV (131 aa)). The required for nuclear localization stretch occupies residues 71–191 (VNPKGLDEES…PECRLADELG (121 aa)). The segment at 123–133 (YRFVQGKDWGF) is important for binding substrate proteins. The BTB domain maps to 173–297 (QNTMNMVKVP…MCEDALCSNL (125 aa)). Important for homodimerization stretches follow at residues 186–217 (LADE…HKAI) and 297–355 (LSVE…AYRS).

The protein belongs to the Tdpoz family. In terms of assembly, interacts with GLI2 and GLI3. Homodimer and homooligomer. Heterodimer with SPOPL. Each dimer interacts with two CUL3 molecules. Part of cullin-RING-based BCR (BTB-CUL3-RBX1) E3 ubiquitin-protein ligase complexes that contain CUL3 and homodimeric SPOP, or the heterodimer formed by SPOP and SPOPL, plus a target protein, such as MACROH2A1, PDX1/IPF1, BMI1, BRMS1 and DAXX. Interacts with IRF1; this interaction mediates IRF1 proteasomal degradation. Interacts with HNF1A.

Its subcellular location is the nucleus. The protein localises to the nucleus speckle. Its pathway is protein modification; protein ubiquitination. Component of a cullin-RING-based BCR (BTB-CUL3-RBX1) E3 ubiquitin-protein ligase complex that mediates the ubiquitination of target proteins, leading most often to their proteasomal degradation. In complex with CUL3, involved in ubiquitination and proteasomal degradation of BRMS1, DAXX, PDX1/IPF1, GLI2 and GLI3. In complex with CUL3, involved in ubiquitination of MACROH2A1 and BMI1; this does not lead to their proteasomal degradation. Inhibits transcriptional activation of PDX1/IPF1 targets, such as insulin, by promoting PDX1/IPF1 degradation. The cullin-RING-based BCR (BTB-CUL3-RBX1) E3 ubiquitin-protein ligase complex containing homodimeric SPOP has higher ubiquitin ligase activity than the complex that contains the heterodimer formed by SPOP and SPOPL. Involved in the regulation of bromodomain and extra-terminal motif (BET) proteins BRD2, BRD3, BRD4 stability.Plays an essential role for proper translation, but not for their degradation, of critical DNA replication licensing factors CDT1 and CDC6, thereby participating in DNA synthesis and cell proliferation. Regulates interferon regulatory factor 1/IRF1 proteasomal turnover by targeting S/T-rich degrons in IRF1. Involved in ubiquitination of BRDT and promotes its degradation, thereby regulates histone removal in early condensing spermatids prior to histone-to-protamine exchange. In Bos taurus (Bovine), this protein is Speckle-type POZ protein (SPOP).